We begin with the raw amino-acid sequence, 288 residues long: Bifunctional protein FolD (288 aa).

Residues 164-166 (GRS), serine 193, and isoleucine 234 each bind NADP(+).

This sequence belongs to the tetrahydrofolate dehydrogenase/cyclohydrolase family. Homodimer.

It catalyses the reaction (6R)-5,10-methylene-5,6,7,8-tetrahydrofolate + NADP(+) = (6R)-5,10-methenyltetrahydrofolate + NADPH. The catalysed reaction is (6R)-5,10-methenyltetrahydrofolate + H2O = (6R)-10-formyltetrahydrofolate + H(+). Its pathway is one-carbon metabolism; tetrahydrofolate interconversion. Its function is as follows. Catalyzes the oxidation of 5,10-methylenetetrahydrofolate to 5,10-methenyltetrahydrofolate and then the hydrolysis of 5,10-methenyltetrahydrofolate to 10-formyltetrahydrofolate. The polypeptide is Bifunctional protein FolD (Nitratidesulfovibrio vulgaris (strain DSM 19637 / Miyazaki F) (Desulfovibrio vulgaris)).